A 301-amino-acid chain; its full sequence is HTH-type transcriptional regulator EstR (301 aa).

Residues 5–62 form the HTH lysR-type domain; that stretch reads PSLRQLSYLVTLSETLHFTEAARRSFVTQSTLSGGIMELERLLGGVLVERDRQNVRLT. The segment at residues 22 to 41 is a DNA-binding region (H-T-H motif); the sequence is FTEAARRSFVTQSTLSGGIM.

Belongs to the LysR transcriptional regulatory family.

Transcriptional regulator of the esterase operon. This chain is HTH-type transcriptional regulator EstR (estR), found in Acinetobacter baylyi (strain ATCC 33305 / BD413 / ADP1).